The primary structure comprises 586 residues: Dihydroxy-acid dehydratase 2 (586 aa).

C68 contributes to the [2Fe-2S] cluster binding site. A Mg(2+)-binding site is contributed by D100. A [2Fe-2S] cluster-binding site is contributed by C141. The Mg(2+) site is built by D142 and K143. K143 is subject to N6-carboxylysine. Residue C213 participates in [2Fe-2S] cluster binding. E463 provides a ligand contact to Mg(2+). Catalysis depends on S489, which acts as the Proton acceptor.

The protein belongs to the IlvD/Edd family. Homodimer. Requires [2Fe-2S] cluster as cofactor. The cofactor is Mg(2+).

The enzyme catalyses (2R)-2,3-dihydroxy-3-methylbutanoate = 3-methyl-2-oxobutanoate + H2O. It carries out the reaction (2R,3R)-2,3-dihydroxy-3-methylpentanoate = (S)-3-methyl-2-oxopentanoate + H2O. The protein operates within amino-acid biosynthesis; L-isoleucine biosynthesis; L-isoleucine from 2-oxobutanoate: step 3/4. It functions in the pathway amino-acid biosynthesis; L-valine biosynthesis; L-valine from pyruvate: step 3/4. Functionally, functions in the biosynthesis of branched-chain amino acids. Catalyzes the dehydration of (2R,3R)-2,3-dihydroxy-3-methylpentanoate (2,3-dihydroxy-3-methylvalerate) into 2-oxo-3-methylpentanoate (2-oxo-3-methylvalerate) and of (2R)-2,3-dihydroxy-3-methylbutanoate (2,3-dihydroxyisovalerate) into 2-oxo-3-methylbutanoate (2-oxoisovalerate), the penultimate precursor to L-isoleucine and L-valine, respectively. This chain is Dihydroxy-acid dehydratase 2, found in Mesorhizobium japonicum (strain LMG 29417 / CECT 9101 / MAFF 303099) (Mesorhizobium loti (strain MAFF 303099)).